The following is a 311-amino-acid chain: Sensor histidine kinase YcbM (311 aa).

Residues 1 to 21 form a helical membrane-spanning segment; the sequence is MTVLWVAAVIALACLNVIQFI. Residues 22-311 lie on the Cytoplasmic side of the membrane; that stretch reads MKKKRDGNLA…FTITLKRMTY (290 aa). The 219-residue stretch at 92-310 folds into the Histidine kinase domain; the sequence is NMSHDLKTPL…AFTITLKRMT (219 aa). The residue at position 95 (His95) is a Phosphohistidine; by autocatalysis.

The protein resides in the cell membrane. It catalyses the reaction ATP + protein L-histidine = ADP + protein N-phospho-L-histidine.. Member of the two-component regulatory system YcbM/YcbL. Probably activates YcbL by phosphorylation. The polypeptide is Sensor histidine kinase YcbM (ycbM) (Bacillus subtilis (strain 168)).